The following is a 418-amino-acid chain: Serine hydroxymethyltransferase (418 aa).

(6S)-5,6,7,8-tetrahydrofolate contacts are provided by residues leucine 121 and 125–127 (GHL). N6-(pyridoxal phosphate)lysine is present on lysine 230. Residues glutamate 246 and 355–357 (SPF) each bind (6S)-5,6,7,8-tetrahydrofolate.

Belongs to the SHMT family. In terms of assembly, homodimer. It depends on pyridoxal 5'-phosphate as a cofactor.

The protein localises to the cytoplasm. It carries out the reaction (6R)-5,10-methylene-5,6,7,8-tetrahydrofolate + glycine + H2O = (6S)-5,6,7,8-tetrahydrofolate + L-serine. It functions in the pathway one-carbon metabolism; tetrahydrofolate interconversion. The protein operates within amino-acid biosynthesis; glycine biosynthesis; glycine from L-serine: step 1/1. Catalyzes the reversible interconversion of serine and glycine with tetrahydrofolate (THF) serving as the one-carbon carrier. This reaction serves as the major source of one-carbon groups required for the biosynthesis of purines, thymidylate, methionine, and other important biomolecules. Also exhibits THF-independent aldolase activity toward beta-hydroxyamino acids, producing glycine and aldehydes, via a retro-aldol mechanism. The chain is Serine hydroxymethyltransferase from Streptococcus pneumoniae serotype 4 (strain ATCC BAA-334 / TIGR4).